We begin with the raw amino-acid sequence, 1226 residues long: Chromosome partition protein Smc (1226 aa).

32 to 39 provides a ligand contact to ATP; sequence PNGCGKSN. Coiled coils occupy residues 173–231 and 269–491; these read ITKF…IKRN and NSLE…SKSL. The 109-residue stretch at 527 to 635 folds into the SMC hinge domain; sequence YQLLGNLIQC…FDGYFIASKF (109 aa). Coiled coils occupy residues 679-741, 775-965, and 1006-1078; these read QGVV…AAKK, MLES…LREA, and HRRY…KSKE.

It belongs to the SMC family. In terms of assembly, homodimer.

The protein resides in the cytoplasm. Functionally, required for chromosome condensation and partitioning. The polypeptide is Chromosome partition protein Smc (Halobacteriovorax marinus (strain ATCC BAA-682 / DSM 15412 / SJ) (Bacteriovorax marinus)).